Reading from the N-terminus, the 174-residue chain is Peptide deformylase (174 aa).

Fe cation is bound by residues C94 and H136. E137 is a catalytic residue. Position 140 (H140) interacts with Fe cation.

Belongs to the polypeptide deformylase family. It depends on Fe(2+) as a cofactor.

The enzyme catalyses N-terminal N-formyl-L-methionyl-[peptide] + H2O = N-terminal L-methionyl-[peptide] + formate. Removes the formyl group from the N-terminal Met of newly synthesized proteins. Requires at least a dipeptide for an efficient rate of reaction. N-terminal L-methionine is a prerequisite for activity but the enzyme has broad specificity at other positions. The chain is Peptide deformylase from Maricaulis maris (strain MCS10) (Caulobacter maris).